The following is a 254-amino-acid chain: Bax inhibitor 1 homolog (254 aa).

The Cytoplasmic portion of the chain corresponds to M1–V43. Residues Y44–I64 form a helical membrane-spanning segment. The Lumenal segment spans residues Y65–R66. The helical transmembrane segment at P67–P87 threads the bilayer. At R88–R98 the chain is on the cytoplasmic side. The helical transmembrane segment at F99–L119 threads the bilayer. Residues Y120–S126 are Lumenal-facing. A helical transmembrane segment spans residues I127–L147. Residues L148–R152 lie on the Cytoplasmic side of the membrane. The helical transmembrane segment at L153–L173 threads the bilayer. Residues T174–L187 lie on the Lumenal side of the membrane. A helical transmembrane segment spans residues F188–V208. At H209 to K217 the chain is on the cytoplasmic side. The segment at residues D218–L238 is an intramembrane region (helical). Topologically, residues K239–R254 are cytoplasmic.

It belongs to the BI1 family.

Its subcellular location is the endoplasmic reticulum membrane. The chain is Bax inhibitor 1 homolog from Dictyostelium discoideum (Social amoeba).